The chain runs to 224 residues: UPF0758 protein PFLU_5982 (224 aa).

Positions 102–224 (VLESPKAVRD…PLSMAEYGWL (123 aa)) constitute an MPN domain. Zn(2+) contacts are provided by H173, H175, and D186. The JAMM motif motif lies at 173 to 186 (HNHPSGSLEPSAAD).

This sequence belongs to the UPF0758 family.

The sequence is that of UPF0758 protein PFLU_5982 from Pseudomonas fluorescens (strain SBW25).